The chain runs to 335 residues: Oligopeptide transport ATP-binding protein OppD (335 aa).

The 250-residue stretch at 18–267 (LEVNDLRVTF…PVHPYSIGLL (250 aa)) folds into the ABC transporter domain. 54–61 (GESGSGKS) provides a ligand contact to ATP.

It belongs to the ABC transporter superfamily. In terms of assembly, the complex is composed of two ATP-binding proteins (OppD and OppF), two transmembrane proteins (OppB and OppC) and a solute-binding protein (OppA).

It localises to the cell inner membrane. The enzyme catalyses a [peptide](out) + ATP + H2O = a [peptide](in) + ADP + phosphate + H(+). It catalyses the reaction L-alanyl-gamma-D-glutamyl-meso-2,6-diaminopimelate(out) + ATP + H2O = L-alanyl-gamma-D-glutamyl-meso-2,6-diaminopimelate(in) + ADP + phosphate + H(+). In terms of biological role, part of the ABC transporter complex OppABCDF involved in the uptake of oligopeptides, including the cell wall murein tripeptide L-alanyl-gamma-D-glutamyl-meso-diaminopimelate. Responsible for energy coupling to the transport system. Plays an important nutritional role and is involved in the recycling of cell wall peptides. Binds ATP. This chain is Oligopeptide transport ATP-binding protein OppD, found in Salmonella typhimurium (strain LT2 / SGSC1412 / ATCC 700720).